A 302-amino-acid chain; its full sequence is tRNA pseudouridine synthase B (302 aa).

The Nucleophile role is filled by D40.

This sequence belongs to the pseudouridine synthase TruB family. Type 1 subfamily.

The enzyme catalyses uridine(55) in tRNA = pseudouridine(55) in tRNA. In terms of biological role, responsible for synthesis of pseudouridine from uracil-55 in the psi GC loop of transfer RNAs. The chain is tRNA pseudouridine synthase B from Shouchella clausii (strain KSM-K16) (Alkalihalobacillus clausii).